We begin with the raw amino-acid sequence, 336 residues long: D-erythrose-4-phosphate dehydrogenase (336 aa).

Residues 11–12 (RI) and R80 each bind NAD(+). Substrate is bound by residues 153 to 155 (SCT), R199, 212 to 213 (TK), and R235. C154 functions as the Nucleophile in the catalytic mechanism. N317 provides a ligand contact to NAD(+).

This sequence belongs to the glyceraldehyde-3-phosphate dehydrogenase family. Epd subfamily. In terms of assembly, homotetramer.

The protein localises to the cytoplasm. It carries out the reaction D-erythrose 4-phosphate + NAD(+) + H2O = 4-phospho-D-erythronate + NADH + 2 H(+). It functions in the pathway cofactor biosynthesis; pyridoxine 5'-phosphate biosynthesis; pyridoxine 5'-phosphate from D-erythrose 4-phosphate: step 1/5. Its function is as follows. Catalyzes the NAD-dependent conversion of D-erythrose 4-phosphate to 4-phosphoerythronate. This is D-erythrose-4-phosphate dehydrogenase from Aeromonas hydrophila subsp. hydrophila (strain ATCC 7966 / DSM 30187 / BCRC 13018 / CCUG 14551 / JCM 1027 / KCTC 2358 / NCIMB 9240 / NCTC 8049).